The chain runs to 260 residues: Thiazole synthase (260 aa).

The Schiff-base intermediate with DXP role is filled by Lys-96. Residues Gly-157, 184–185 (AG), and 206–207 (NT) each bind 1-deoxy-D-xylulose 5-phosphate.

Belongs to the ThiG family. Homotetramer. Forms heterodimers with either ThiH or ThiS.

The protein localises to the cytoplasm. It carries out the reaction [ThiS sulfur-carrier protein]-C-terminal-Gly-aminoethanethioate + 2-iminoacetate + 1-deoxy-D-xylulose 5-phosphate = [ThiS sulfur-carrier protein]-C-terminal Gly-Gly + 2-[(2R,5Z)-2-carboxy-4-methylthiazol-5(2H)-ylidene]ethyl phosphate + 2 H2O + H(+). The protein operates within cofactor biosynthesis; thiamine diphosphate biosynthesis. Its function is as follows. Catalyzes the rearrangement of 1-deoxy-D-xylulose 5-phosphate (DXP) to produce the thiazole phosphate moiety of thiamine. Sulfur is provided by the thiocarboxylate moiety of the carrier protein ThiS. In vitro, sulfur can be provided by H(2)S. The sequence is that of Thiazole synthase from Rhodopseudomonas palustris (strain HaA2).